We begin with the raw amino-acid sequence, 434 residues long: Beta-enolase (434 aa).

Residue Ala-2 is modified to N-acetylalanine. At Thr-72 the chain carries Phosphothreonine. Ser-83 and Ser-157 each carry phosphoserine. 2 residues coordinate substrate: His-158 and Glu-167. At Ser-176 the chain carries Phosphoserine. Position 205 is a phosphothreonine (Thr-205). The active-site Proton donor is Glu-210. Position 229 is a phosphothreonine (Thr-229). A Phosphotyrosine modification is found at Tyr-236. Residue Asp-245 participates in Mg(2+) binding. Residue Ser-263 is modified to Phosphoserine. The substrate site is built by Glu-293 and Asp-318. Residues Glu-293 and Asp-318 each coordinate Mg(2+). The Proton acceptor role is filled by Lys-343. Substrate is bound by residues 370–373 (SHRS) and Lys-394.

It belongs to the enolase family. Mammalian enolase is composed of 3 isozyme subunits, alpha, beta and gamma, which can form homodimers or heterodimers which are cell-type and development-specific. Interacts with PNKD. Mg(2+) serves as cofactor. In terms of tissue distribution, the alpha/alpha homodimer is expressed in embryo and in most adult tissues. The alpha/beta heterodimer and the beta/beta homodimer are found in striated muscle, and the alpha/gamma heterodimer and the gamma/gamma homodimer in neurons.

Its subcellular location is the cytoplasm. The catalysed reaction is (2R)-2-phosphoglycerate = phosphoenolpyruvate + H2O. Its pathway is carbohydrate degradation; glycolysis; pyruvate from D-glyceraldehyde 3-phosphate: step 4/5. Glycolytic enzyme that catalyzes the conversion of 2-phosphoglycerate to phosphoenolpyruvate. Appears to have a function in striated muscle development and regeneration. This chain is Beta-enolase (ENO3), found in Homo sapiens (Human).